The sequence spans 348 residues: Short-wave-sensitive opsin 1 (348 aa).

The Extracellular portion of the chain corresponds to 1–33 (MRKMSEEEFYLFKNISSVGPWDGPQYHIAPVWA). Asn-14 carries an N-linked (GlcNAc...) asparagine glycan. The chain crosses the membrane as a helical span at residues 34 to 58 (FYLQAAFMGTVFLIGFPLNAMVLVA). Residues 59 to 70 (TLRYKKLRQPLN) lie on the Cytoplasmic side of the membrane. Residues 71-96 (YILVNVSFGGFLLCIFSVFPVFVASC) traverse the membrane as a helical segment. The Extracellular portion of the chain corresponds to 97 to 110 (NGYFVFGRHVCALE). Residues Cys-107 and Cys-184 are joined by a disulfide bond. A helical transmembrane segment spans residues 111–130 (GFLGTVAGLVTGWSLAFLAF). Residues 131–149 (ERYIVICKPFGNFRFSSKH) are Cytoplasmic-facing. The helical transmembrane segment at 150–173 (ALTVVLATWTIGIGVSIPPFFGWS) threads the bilayer. Residues 174–199 (RFIPEGLQCSCGPDWYTVGTKYRSES) lie on the Extracellular side of the membrane. A helical membrane pass occupies residues 200–227 (YTWFLFIFCFIVPLSLICFSYTQLLRAL). At 228-249 (KAVAAQQQESATTQKAEREVSR) the chain is on the cytoplasmic side. A helical membrane pass occupies residues 250–273 (MVVVMVGSFCVCYVPYAAFAMYMV). Topologically, residues 274 to 281 (NNRNHGLD) are extracellular. The chain crosses the membrane as a helical span at residues 282 to 306 (LRLVTIPSFFSKSACIYNPIIYCFM). Position 293 is an N6-(retinylidene)lysine (Lys-293). The Cytoplasmic segment spans residues 307-348 (NKQFQACIMKMVCGKAMTDESDTCSSQKTEVSTVSSTQVGPN).

This sequence belongs to the G-protein coupled receptor 1 family. Opsin subfamily. In terms of processing, phosphorylated on some or all of the serine and threonine residues present in the C-terminal region.

It localises to the cell membrane. Its subcellular location is the photoreceptor inner segment. It is found in the cell projection. The protein resides in the cilium. The protein localises to the photoreceptor outer segment. It localises to the cytoplasm. Its subcellular location is the perinuclear region. Visual pigments are the light-absorbing molecules that mediate vision. They consist of an apoprotein, opsin, covalently linked to cis-retinal. Required for the maintenance of cone outer segment organization in the ventral retina, but not essential for the maintenance of functioning cone photoreceptors. Involved in ensuring correct abundance and localization of retinal membrane proteins. May increase spectral sensitivity in dim light. The chain is Short-wave-sensitive opsin 1 (OPN1SW) from Pan paniscus (Pygmy chimpanzee).